We begin with the raw amino-acid sequence, 299 residues long: Probable phosphate butyryltransferase (299 aa).

It belongs to the phosphate acetyltransferase and butyryltransferase family.

The catalysed reaction is butanoyl-CoA + phosphate = butanoyl phosphate + CoA. Its function is as follows. Catalyzes the conversion of butyryl-CoA through butyryl phosphate to butyrate. This is Probable phosphate butyryltransferase (yqiS) from Bacillus subtilis (strain 168).